Here is a 171-residue protein sequence, read N- to C-terminus: MSHNLEGKKAIVAEVSSQVAKAQAIVIAEYRGLGVDQFTRLRVKARESGIYFRVIKNTFARRAVADTPFSGLAESMVGPLAYGIGSDPVATAKILHEFAKDNDRFVIKAGAMAGIVMSDKDVAALAVLPSREELLSKLLGTMQAPIAKFVRTLNEVPSKFVRGLAAVRDKK.

Belongs to the universal ribosomal protein uL10 family. As to quaternary structure, part of the ribosomal stalk of the 50S ribosomal subunit. The N-terminus interacts with L11 and the large rRNA to form the base of the stalk. The C-terminus forms an elongated spine to which L12 dimers bind in a sequential fashion forming a multimeric L10(L12)X complex.

Functionally, forms part of the ribosomal stalk, playing a central role in the interaction of the ribosome with GTP-bound translation factors. The sequence is that of Large ribosomal subunit protein uL10 from Nitrosomonas europaea (strain ATCC 19718 / CIP 103999 / KCTC 2705 / NBRC 14298).